A 459-amino-acid polypeptide reads, in one-letter code: Cysteine--tRNA ligase (459 aa).

Cysteine 28 lines the Zn(2+) pocket. The 'HIGH' region motif lies at 30–40 (VTVYDLCHIGH). Positions 209, 234, and 238 each coordinate Zn(2+). Positions 266-270 (KMSKS) match the 'KMSKS' region motif. Lysine 269 provides a ligand contact to ATP.

It belongs to the class-I aminoacyl-tRNA synthetase family. As to quaternary structure, monomer. The cofactor is Zn(2+).

It is found in the cytoplasm. The enzyme catalyses tRNA(Cys) + L-cysteine + ATP = L-cysteinyl-tRNA(Cys) + AMP + diphosphate. The polypeptide is Cysteine--tRNA ligase (Shewanella oneidensis (strain ATCC 700550 / JCM 31522 / CIP 106686 / LMG 19005 / NCIMB 14063 / MR-1)).